A 238-amino-acid polypeptide reads, in one-letter code: Protein shisa-3 homolog (238 aa).

An N-terminal signal peptide occupies residues methionine 1–alanine 21. Residues glutamine 22 to proline 98 are Lumenal-facing. Residues phenylalanine 99–tyrosine 119 form a helical membrane-spanning segment. At cysteine 120 to serine 238 the chain is on the cytoplasmic side. Residues threonine 151–glycine 173 form a disordered region. Low complexity predominate over residues serine 159 to glycine 173.

It belongs to the shisa family.

It is found in the endoplasmic reticulum membrane. Functionally, plays an essential role in the maturation of presomitic mesoderm cells by individual attenuation of both FGF and WNT signaling. This Homo sapiens (Human) protein is Protein shisa-3 homolog (SHISA3).